We begin with the raw amino-acid sequence, 235 residues long: Thrombin-like enzyme bilineobin (235 aa).

Residues 1–227 (IIGGDECNIN…HLDWIQSIIA (227 aa)) form the Peptidase S1 domain. Disulfide bonds link Cys-7/Cys-141, Cys-28/Cys-44, Cys-78/Cys-234, Cys-120/Cys-188, Cys-152/Cys-167, and Cys-178/Cys-203. His-43 functions as the Charge relay system in the catalytic mechanism. Asn-45, Asn-57, and Asn-81 each carry an N-linked (GlcNAc...) asparagine glycan. Residue Asp-88 is the Charge relay system of the active site. 2 N-linked (GlcNAc...) asparagine glycosylation sites follow: Asn-132 and Asn-148. The active-site Charge relay system is the Ser-182. N-linked (GlcNAc...) asparagine glycosylation occurs at Asn-229.

The protein belongs to the peptidase S1 family. Snake venom subfamily. Monomer. Glycosylated. Expressed by the venom gland.

The protein localises to the secreted. Not inhibited by hirudin. Its function is as follows. Thrombin-like snake venom serine protease that has coagulant activity by releasing fibrinopeptides A and B from fibrinogen alpha (FGA) and beta (FGB), with a preference for beta chain. The sequence is that of Thrombin-like enzyme bilineobin from Agkistrodon bilineatus (Cantil).